Reading from the N-terminus, the 586-residue chain is Lamin-B1 (586 aa).

Positions 1–31 (MATATPVPPRMGSRAGGPTTPLSPTRLSRLQ) are disordered. Ala-2 is modified (N-acetylalanine). A head region spans residues 2 to 34 (ATATPVPPRMGSRAGGPTTPLSPTRLSRLQEKE). Residues Thr-3 and Thr-5 each carry the phosphothreonine modification. Omega-N-methylarginine is present on Arg-14. Thr-20 bears the Phosphothreonine mark. Ser-23 carries the phosphoserine modification. Thr-25 is subject to Phosphothreonine. Ser-28 is subject to Phosphoserine. One can recognise an IF rod domain in the interval 32–388 (EKEELRELND…KLLEGEEERL (357 aa)). Positions 35–69 (ELRELNDRLAVYIDKVRSLETENSALQLQVTEREE) are coil 1A. The segment at 70-81 (VRGRELTGLKAL) is linker 1. Residues 82-215 (YETELADARR…EFRKSMYEEE (134 aa)) form a coil 1B region. Lys-102 is covalently cross-linked (Glycyl lysine isopeptide (Lys-Gly) (interchain with G-Cter in SUMO2)). N6-acetyllysine is present on Lys-111. Residue Lys-123 forms a Glycyl lysine isopeptide (Lys-Gly) (interchain with G-Cter in SUMO2) linkage. Position 126 is a phosphoserine (Ser-126). Lys-145 participates in a covalent cross-link: Glycyl lysine isopeptide (Lys-Gly) (interchain with G-Cter in SUMO2). Lys-157 is modified (N6-acetyllysine; alternate). Residue Lys-157 forms a Glycyl lysine isopeptide (Lys-Gly) (interchain with G-Cter in SUMO2); alternate linkage. A Phosphoserine modification is found at Ser-158. A Glycyl lysine isopeptide (Lys-Gly) (interchain with G-Cter in SUMO2) cross-link involves residue Lys-181. A phosphoserine mark is found at Ser-200, Ser-210, and Ser-232. A linker 2 region spans residues 216 to 243 (INETRRKHETRLVEVDSGRQIEYEYKLA). Residues Lys-241 and Lys-261 each participate in a glycyl lysine isopeptide (Lys-Gly) (interchain with G-Cter in SUMO2) cross-link. Residues 244 to 386 (QALHEMREQH…YRKLLEGEEE (143 aa)) form a coil 2 region. N6-acetyllysine; alternate is present on Lys-271. A Glycyl lysine isopeptide (Lys-Gly) (interchain with G-Cter in SUMO2); alternate cross-link involves residue Lys-271. Residues Ser-278 and Ser-302 each carry the phosphoserine modification. Residue Lys-312 forms a Glycyl lysine isopeptide (Lys-Gly) (interchain with G-Cter in SUMO2) linkage. An N6-acetyllysine; alternate modification is found at Lys-330. Residue Lys-330 forms a Glycyl lysine isopeptide (Lys-Gly) (interchain with G-Cter in SUMO2); alternate linkage. A phosphoserine mark is found at Ser-375 and Ser-393. Positions 387–586 (RLKLSPSPSS…RASNRSCAIM (200 aa)) are tail. The disordered stretch occupies residues 388 to 432 (LKLSPSPSSRVTVSRASSSRSVRTTRGKRKRVDVEESEASSSVSI). Low complexity predominate over residues 390–409 (LSPSPSSRVTVSRASSSRSV). Thr-399 is a glycosylation site (O-linked (GlcNAc) threonine). Omega-N-methylarginine is present on Arg-413. A Nuclear localization signal motif is present at residues 415 to 420 (KRKRVD). The region spanning 430 to 546 (VSISHSASAT…EEVAQRSTVF (117 aa)) is the LTD domain. The residue at position 483 (Lys-483) is an N6-acetyllysine. Lys-532 participates in a covalent cross-link: Glycyl lysine isopeptide (Lys-Gly) (interchain with G-Cter in SUMO2). Ser-534 carries the phosphoserine modification. A Glycyl lysine isopeptide (Lys-Gly) (interchain with G-Cter in SUMO2) cross-link involves residue Lys-547. A Phosphothreonine modification is found at Thr-575. Cysteine methyl ester is present on Cys-583. Cys-583 carries the S-farnesyl cysteine lipid modification. Residues 584–586 (AIM) constitute a propeptide, removed in mature form.

This sequence belongs to the intermediate filament family. As to quaternary structure, homodimer. Lamin dimers then assemble into dimeric head-to-tail polymers. Ultimately, two head-to-tail polymers assemble laterally into a protofilament with a uniformly shaped rod of 3.5 nm in diameter. Interacts with SPAG4 and SEPT12. Post-translationally, B-type lamins undergo a series of modifications, such as farnesylation and phosphorylation. Increased phosphorylation of the lamins occurs before envelope disintegration and probably plays a role in regulating lamin associations. Phosphorylation plays a key role in lamin organization, subcellular localization and nuclear envelope disintegration. Phosphorylation by CDK1 at Ser-23 and Ser-393 at the onset of mitosis drives lamin disassembly and nuclear envelope breakdown.

Its subcellular location is the nucleus lamina. Its function is as follows. Lamins are intermediate filament proteins that assemble into a filamentous meshwork, and which constitute the major components of the nuclear lamina, a fibrous layer on the nucleoplasmic side of the inner nuclear membrane. Lamins provide a framework for the nuclear envelope, bridging the nuclear envelope and chromatin, thereby playing an important role in nuclear assembly, chromatin organization, nuclear membrane and telomere dynamics. The structural integrity of the lamina is strictly controlled by the cell cycle, as seen by the disintegration and formation of the nuclear envelope in prophase and telophase, respectively. This is Lamin-B1 (LMNB1) from Homo sapiens (Human).